A 553-amino-acid chain; its full sequence is 4-coumarate--CoA ligase (553 aa).

Positions 198, 199, 200, 201, 202, and 206 each coordinate ATP. Residues tyrosine 248 and serine 252 each coordinate (E)-4-coumaroyl-AMP. Position 269 (lysine 269) interacts with CoA. Positions 271–340 (EIVPFLELIQ…AKFPNAKLGQ (70 aa)) are SBD1. The (E)-4-coumaroyl-AMP site is built by alanine 318, glutamine 340, glycine 341, threonine 345, and methionine 353. The ATP site is built by glutamine 340, glycine 341, and threonine 345. Positions 341-408 (GYGMTEAGPV…IRGDQIMKGY (68 aa)) are SBD2. Aspartate 429 and arginine 444 together coordinate ATP. 2 residues coordinate (E)-4-coumaroyl-AMP: lysine 446 and lysine 450. CoA-binding residues include lysine 452 and glycine 453. An ATP-binding site is contributed by lysine 535.

Belongs to the ATP-dependent AMP-binding enzyme family. It depends on Mg(2+) as a cofactor.

It catalyses the reaction (E)-4-coumarate + ATP + CoA = (E)-4-coumaroyl-CoA + AMP + diphosphate. The enzyme catalyses (E)-4-coumarate + ATP + H(+) = (E)-4-coumaroyl-AMP + diphosphate. The catalysed reaction is (E)-4-coumaroyl-AMP + CoA = (E)-4-coumaroyl-CoA + AMP + H(+). It participates in phytoalexin biosynthesis; 3,4',5-trihydroxystilbene biosynthesis; 3,4',5-trihydroxystilbene from trans-4-coumarate: step 1/2. Carboxylate--CoA ligase that may use 4-coumarate as substrate. Follows a two-step reaction mechanism, wherein the carboxylate substrate first undergoes adenylation by ATP, followed by a thioesterification in the presence of CoA to yield the final CoA thioester. This chain is 4-coumarate--CoA ligase, found in Vanilla planifolia (Vanilla).